The sequence spans 113 residues: Protein TrbJ (113 aa).

The polypeptide is Protein TrbJ (trbJ) (Escherichia coli (strain K12)).